Here is a 661-residue protein sequence, read N- to C-terminus: MGTHGATKSATSAVPTPRSNSMAMVRLAIGLLGVCAVVAAFGLVSGARRYAEAGNPYPGAFVSVAEPVGFFAASLAGALCLGALIHVVMTAKPEPDGLIDAAAFRIHLLAERVSGLWLGLAATMVVIQAAHDTGVGPARLLASGALSDSVAASEMARGWIVAAICALVVATALRLYTRWLGHVVLLVPTVLAVVATAVTGNPGQGPDHDYATSAAIVFAVAFATLTGLKIAAALAGTTPSRAVLVTQVTCGALALAYGAMLLYLFIPGWAVDSDFARLGLLAGVILTSVWLFDCWRLLVRPPHAGRRRGGGSGAALAMMAAMASIAAMAVMTAPRFLTHAFTAWDVFLGYELPQPPTIARVLTVWRFDSLIGAAGVVLAIGYAAGFAALRRRGNSWPVGRLIAWLTGCAALVFTSGSGVRAYGSAMFSVHMAEHMTLNMFIPVLLVLGGPVTLALRVLPVTGDGRPPGAREWLTWLLHSRVTTFLSHPITAFVLFVASPYIVYFTPLFDTFVRYHWGHEFMAIHFLVVGYLFYWAIIGIDPGPRRLPYPGRIGLLFAVMPFHAFFGIALMTMSSTVGATFYRSVNLPWLSSIIADQHLGGGIAWSLTELPVIMVIVALVTQWARQDRRVASREDRHADSDYADDELEAYNAMLRELSRMRR.

16 consecutive transmembrane segments (helical) span residues 27-47, 68-88, 116-136, 150-170, 179-199, 214-234, 251-271, 279-299, 313-333, 369-389, 396-416, 435-455, 488-508, 519-539, 552-572, and 599-619; these read LAIG…VSGA, VGFF…IHVV, LWLG…TGVG, VAAS…LVVA, WLGH…TAVT, AAIV…AAAL, GALA…GWAV, GLLA…RLLV, GAAL…VMTA, SLIG…FAAL, WPVG…FTSG, MTLN…TLAL, PITA…TPLF, EFMA…IIGI, IGLL…LMTM, and GGGI…VALV.

The protein to M.leprae ML1998.

The protein resides in the cell membrane. This is an uncharacterized protein from Mycobacterium tuberculosis (strain CDC 1551 / Oshkosh).